The primary structure comprises 357 residues: Dihydroflavonol 4-reductase (357 aa).

Positions 49 and 168 each coordinate NADP(+).

The protein belongs to the NAD(P)-dependent epimerase/dehydratase family. Dihydroflavonol-4-reductase subfamily.

The catalysed reaction is a (2R,3S,4S)-leucoanthocyanidin + NADP(+) = a (2R,3R)-dihydroflavonol + NADPH + H(+). The enzyme catalyses (2S)-flavan-4-ol + NADP(+) = (2S)-flavanone + NADPH + H(+). Its pathway is pigment biosynthesis; anthocyanin biosynthesis. Functionally, bifunctional enzyme involved in flavonoid metabolism. The chain is Dihydroflavonol 4-reductase (A1) from Zea mays (Maize).